A 100-amino-acid polypeptide reads, in one-letter code: Urease subunit gamma (100 aa).

It belongs to the urease gamma subunit family. As to quaternary structure, heterotrimer of UreA (gamma), UreB (beta) and UreC (alpha) subunits. Three heterotrimers associate to form the active enzyme.

The protein resides in the cytoplasm. It catalyses the reaction urea + 2 H2O + H(+) = hydrogencarbonate + 2 NH4(+). It participates in nitrogen metabolism; urea degradation; CO(2) and NH(3) from urea (urease route): step 1/1. This chain is Urease subunit gamma, found in Pseudomonas syringae pv. tomato (strain ATCC BAA-871 / DC3000).